Here is a 94-residue protein sequence, read N- to C-terminus: MFTINVETRKEQGKGASRRLRTANKFPAIIYGGNEAAVAIELDHDSVMNLQSKPGFYDEVLTLVVDGKETKVKVQAVQRHPFKPKLHHIDFVRA.

The protein belongs to the bacterial ribosomal protein bL25 family. Part of the 50S ribosomal subunit; part of the 5S rRNA/L5/L18/L25 subcomplex. Contacts the 5S rRNA. Binds to the 5S rRNA independently of L5 and L18.

Functionally, this is one of the proteins that binds to the 5S RNA in the ribosome where it forms part of the central protuberance. This chain is Large ribosomal subunit protein bL25, found in Erwinia tasmaniensis (strain DSM 17950 / CFBP 7177 / CIP 109463 / NCPPB 4357 / Et1/99).